The primary structure comprises 387 residues: Putative transposase y4pF/y4sB (387 aa).

The protein belongs to the transposase 20 family.

This is Putative transposase y4pF/y4sB from Sinorhizobium fredii (strain NBRC 101917 / NGR234).